The sequence spans 181 residues: Macro domain-containing protein in sno 5'region (181 aa).

Positions 1-172 (MTTITLVQGD…TFARELGDAG (172 aa)) constitute a Macro domain.

It belongs to the MacroD-type family.

In Streptomyces nogalater, this protein is Macro domain-containing protein in sno 5'region.